A 466-amino-acid polypeptide reads, in one-letter code: Neuraminidase (466 aa).

Topologically, residues 1-8 are intravirion; sequence MLPSTVQT. Residues 9-31 traverse the membrane as a helical segment; that stretch reads LTLLLTSGGVLLSLYVSASLSYL. An involved in apical transport and lipid raft association region spans residues 13–35; it reads LTSGGVLLSLYVSASLSYLLYSD. Over 32–466 the chain is Virion surface; it reads LYSDVLLKFS…DTVTGVDMAL (435 aa). Residues 38-86 form a hypervariable stalk region region; that stretch reads LKFSSTKTTAPTMSLECTNASNAQTVNHSATKEMTFPPPEPEWTYPRLS. N-linked (GlcNAc...) asparagine; by host glycosylation is found at Asn-56 and Asn-64. Disulfide bonds link Cys-87/Cys-420, Cys-122/Cys-127, Cys-182/Cys-229, Cys-231/Cys-236, Cys-277/Cys-291, Cys-279/Cys-289, Cys-318/Cys-337, and Cys-424/Cys-447. The tract at residues 89 to 466 is head of neuraminidase; it reads GSTFQKALLI…DTVTGVDMAL (378 aa). Arg-116 is a substrate binding site. Asn-144 carries an N-linked (GlcNAc...) asparagine; by host glycan. The active-site Proton donor/acceptor is the Asp-149. Arg-150 provides a ligand contact to substrate. Residue 275–276 coordinates substrate; the sequence is EE. Asn-284 is a glycosylation site (N-linked (GlcNAc...) asparagine; by host). Arg-292 lines the substrate pocket. Ca(2+) contacts are provided by Asp-293, Thr-297, Asp-324, and Gly-346. Arg-374 contacts substrate. Tyr-409 functions as the Nucleophile in the catalytic mechanism.

This sequence belongs to the glycosyl hydrolase 34 family. As to quaternary structure, homotetramer. Ca(2+) serves as cofactor. In terms of processing, N-glycosylated.

Its subcellular location is the virion membrane. It is found in the host apical cell membrane. The catalysed reaction is Hydrolysis of alpha-(2-&gt;3)-, alpha-(2-&gt;6)-, alpha-(2-&gt;8)- glycosidic linkages of terminal sialic acid residues in oligosaccharides, glycoproteins, glycolipids, colominic acid and synthetic substrates.. With respect to regulation, inhibited by the neuraminidase inhibitors zanamivir (Relenza) and oseltamivir (Tamiflu). These drugs interfere with the release of progeny virus from infected cells and are effective against all influenza strains. Resistance to neuraminidase inhibitors is quite rare. Functionally, catalyzes the removal of terminal sialic acid residues from viral and cellular glycoconjugates. Cleaves off the terminal sialic acids on the glycosylated HA during virus budding to facilitate virus release. Additionally helps virus spread through the circulation by further removing sialic acids from the cell surface. These cleavages prevent self-aggregation and ensure the efficient spread of the progeny virus from cell to cell. Otherwise, infection would be limited to one round of replication. Described as a receptor-destroying enzyme because it cleaves a terminal sialic acid from the cellular receptors. May facilitate viral invasion of the upper airways by cleaving the sialic acid moieties on the mucin of the airway epithelial cells. Likely to plays a role in the budding process through its association with lipid rafts during intracellular transport. May additionally display a raft-association independent effect on budding. Plays a role in the determination of host range restriction on replication and virulence. Sialidase activity in late endosome/lysosome traffic seems to enhance virus replication. In Influenza B virus (strain B/Lee/1940), this protein is Neuraminidase.